We begin with the raw amino-acid sequence, 203 residues long: Small ribosomal subunit protein uS4 (203 aa).

Residues 93–153 (QRLDSVVYRL…EKSKNILPIQ (61 aa)) form the S4 RNA-binding domain.

Belongs to the universal ribosomal protein uS4 family. In terms of assembly, part of the 30S ribosomal subunit. Contacts protein S5. The interaction surface between S4 and S5 is involved in control of translational fidelity.

Its function is as follows. One of the primary rRNA binding proteins, it binds directly to 16S rRNA where it nucleates assembly of the body of the 30S subunit. In terms of biological role, with S5 and S12 plays an important role in translational accuracy. This chain is Small ribosomal subunit protein uS4, found in Leuconostoc mesenteroides subsp. mesenteroides (strain ATCC 8293 / DSM 20343 / BCRC 11652 / CCM 1803 / JCM 6124 / NCDO 523 / NBRC 100496 / NCIMB 8023 / NCTC 12954 / NRRL B-1118 / 37Y).